Here is a 607-residue protein sequence, read N- to C-terminus: UvrABC system protein C (607 aa).

The GIY-YIG domain occupies 19–97 (TLSGVYQMRD…IKQYQPKFNI (79 aa)). Residues 205–240 (EHLLQTLTEHMLQASAAQQYERAAIVRDQISELRTI) enclose the UVR domain.

The protein belongs to the UvrC family. In terms of assembly, interacts with UvrB in an incision complex.

It localises to the cytoplasm. Its function is as follows. The UvrABC repair system catalyzes the recognition and processing of DNA lesions. UvrC both incises the 5' and 3' sides of the lesion. The N-terminal half is responsible for the 3' incision and the C-terminal half is responsible for the 5' incision. This Dichelobacter nodosus (strain VCS1703A) protein is UvrABC system protein C.